The primary structure comprises 290 residues: Phosphatidylglycerol--prolipoprotein diacylglyceryl transferase (290 aa).

Helical transmembrane passes span Val21–Ala41, Leu60–Tyr80, Trp96–Phe116, Phe124–Leu144, Ser199–Ile219, Gly226–Phe246, and Ile260–Trp280. Arg143 is a binding site for a 1,2-diacyl-sn-glycero-3-phospho-(1'-sn-glycerol).

It belongs to the Lgt family.

The protein resides in the cell inner membrane. The catalysed reaction is L-cysteinyl-[prolipoprotein] + a 1,2-diacyl-sn-glycero-3-phospho-(1'-sn-glycerol) = an S-1,2-diacyl-sn-glyceryl-L-cysteinyl-[prolipoprotein] + sn-glycerol 1-phosphate + H(+). The protein operates within protein modification; lipoprotein biosynthesis (diacylglyceryl transfer). In terms of biological role, catalyzes the transfer of the diacylglyceryl group from phosphatidylglycerol to the sulfhydryl group of the N-terminal cysteine of a prolipoprotein, the first step in the formation of mature lipoproteins. The protein is Phosphatidylglycerol--prolipoprotein diacylglyceryl transferase of Yersinia pseudotuberculosis serotype O:1b (strain IP 31758).